A 457-amino-acid polypeptide reads, in one-letter code: Transmembrane protein 143 (457 aa).

The next 2 membrane-spanning stretches (helical) occupy residues 264 to 284 (ILNVTLIVSGVVFFVNVGMVV) and 285 to 305 (LSDLKMATSLLLLLFAAFMGL). Ser-316 carries the post-translational modification Phosphoserine. Residues 429 to 439 (LSSPKSAPSDD) are compositionally biased toward polar residues. A disordered region spans residues 429–457 (LSSPKSAPSDDNSLEKPLGPAQPSHLVGN).

It is found in the membrane. The sequence is that of Transmembrane protein 143 (TMEM143) from Bos taurus (Bovine).